The following is a 352-amino-acid chain: UDP-N-acetylglucosamine--N-acetylmuramyl-(pentapeptide) pyrophosphoryl-undecaprenol N-acetylglucosamine transferase (352 aa).

UDP-N-acetyl-alpha-D-glucosamine is bound by residues Ser-195 and Gln-287.

The protein belongs to the glycosyltransferase 28 family. MurG subfamily.

The protein resides in the cell membrane. It catalyses the reaction Mur2Ac(oyl-L-Ala-gamma-D-Glu-L-Lys-D-Ala-D-Ala)-di-trans,octa-cis-undecaprenyl diphosphate + UDP-N-acetyl-alpha-D-glucosamine = beta-D-GlcNAc-(1-&gt;4)-Mur2Ac(oyl-L-Ala-gamma-D-Glu-L-Lys-D-Ala-D-Ala)-di-trans,octa-cis-undecaprenyl diphosphate + UDP + H(+). Its pathway is cell wall biogenesis; peptidoglycan biosynthesis. In terms of biological role, cell wall formation. Catalyzes the transfer of a GlcNAc subunit on undecaprenyl-pyrophosphoryl-MurNAc-pentapeptide (lipid intermediate I) to form undecaprenyl-pyrophosphoryl-MurNAc-(pentapeptide)GlcNAc (lipid intermediate II). The polypeptide is UDP-N-acetylglucosamine--N-acetylmuramyl-(pentapeptide) pyrophosphoryl-undecaprenol N-acetylglucosamine transferase (Streptococcus pneumoniae (strain Hungary19A-6)).